We begin with the raw amino-acid sequence, 488 residues long: Microtubule-destabilizing protein 60 (488 aa).

Polar residues predominate over residues 25–56 (AQEVSRFSENSNPNFVSHSTPLEKSSKSSAQK). Disordered regions lie at residues 25 to 71 (AQEV…VFSP), 262 to 304 (HASV…TKKQ), and 436 to 457 (DRPFIPKRSNKHPTVPRDPKFN). Over residues 264–280 (SVSSSWDNSVSSLNSNG) the composition is skewed to low complexity.

The protein belongs to the TPX2 family.

The protein localises to the cytoplasm. It is found in the cytoskeleton. In terms of biological role, binds directly to microtubules. Microtubule-destabilizing protein involved in the PIF3-dependent positive regulation of hypocotyl cell elongation via the modulation of cortical microtubules dynamic in response to light and ethylene signaling. Promotes submergence-induced and ethylene-dependent underwater hypocotyl elongation. The sequence is that of Microtubule-destabilizing protein 60 from Arabidopsis thaliana (Mouse-ear cress).